The sequence spans 432 residues: Adenylosuccinate synthetase (432 aa).

GTP-binding positions include 13-19 and 41-43; these read GDEGKGK and GHT. Residue aspartate 14 is the Proton acceptor of the active site. Mg(2+) is bound by residues aspartate 14 and glycine 41. IMP contacts are provided by residues 14-17, 39-42, threonine 130, arginine 144, glutamine 225, threonine 240, and arginine 304; these read DEGK and NAGH. Histidine 42 acts as the Proton donor in catalysis. 300-306 provides a ligand contact to substrate; it reads ATTGRKR. Residues arginine 306, 332–334, and 415–417 each bind GTP; these read KLD and STG.

It belongs to the adenylosuccinate synthetase family. In terms of assembly, homodimer. It depends on Mg(2+) as a cofactor.

The protein localises to the cytoplasm. It carries out the reaction IMP + L-aspartate + GTP = N(6)-(1,2-dicarboxyethyl)-AMP + GDP + phosphate + 2 H(+). It functions in the pathway purine metabolism; AMP biosynthesis via de novo pathway; AMP from IMP: step 1/2. Functionally, plays an important role in the de novo pathway of purine nucleotide biosynthesis. Catalyzes the first committed step in the biosynthesis of AMP from IMP. The polypeptide is Adenylosuccinate synthetase (Photobacterium profundum (strain SS9)).